A 372-amino-acid chain; its full sequence is Glutamate 5-kinase (372 aa).

Residue Lys-14 coordinates ATP. Substrate is bound by residues Ser-54, Asp-141, and Asn-153. 173–174 (TD) is a binding site for ATP. Residues 280 to 358 (RGTLVLDAGA…DAIESLLGYS (79 aa)) enclose the PUA domain.

This sequence belongs to the glutamate 5-kinase family.

It is found in the cytoplasm. The catalysed reaction is L-glutamate + ATP = L-glutamyl 5-phosphate + ADP. It participates in amino-acid biosynthesis; L-proline biosynthesis; L-glutamate 5-semialdehyde from L-glutamate: step 1/2. Functionally, catalyzes the transfer of a phosphate group to glutamate to form L-glutamate 5-phosphate. The sequence is that of Glutamate 5-kinase from Pseudomonas putida (strain W619).